We begin with the raw amino-acid sequence, 1351 residues long: Non-structural polyprotein 1AB (1351 aa).

Residues 105–144 are a coiled coil; the sequence is LVQDHKAKTREVEDLKSQLSQLRMEHEILRHEYERLKLKS. The next 5 membrane-spanning stretches (helical) occupy residues 153 to 173, 231 to 251, 257 to 277, 304 to 324, and 337 to 357; these read LKVL…TNGA, LVFQ…VYYM, PIVM…LLAV, ISIL…TFMA, and VVFA…PPWV. Active-site charge relay system; for serine protease activity residues include H452, D481, and S544. Residues 579–635 are a coiled coil; sequence EVRKISKREQELEDRVKQLEGMLNMDQAYVDSNLIVDLVREAVQREMKVLRTELANL. An O-(5'-phospho-RNA)-tyrosine modification is found at Y662. Positions 687–699 are enriched in acidic residues; that stretch reads YDDEDEQSEEEAG. Disordered regions lie at residues 687-708 and 822-842; these read YDDE…DPGD and RKRV…GPEE. The span at 822–832 shows a compositional bias: basic residues; that stretch reads RKRVQQPKKLQ. Residues 833–842 show a composition bias toward basic and acidic residues; sequence RGPEDPGPEE. The region spanning 1085 to 1217 is the RdRp catalytic domain; that stretch reads PYWIEFDWTR…TSPSVPNDYV (133 aa).

The protein belongs to the astroviridae polyprotein 1AB family. As to quaternary structure, monomer. Post-translationally, cleaved by the viral and host proteases. The protease is probably autocatalytically cleaved.

Its subcellular location is the host membrane. It catalyses the reaction RNA(n) + a ribonucleoside 5'-triphosphate = RNA(n+1) + diphosphate. Functionally, responsible for the cleavage of the polyprotein into functional products. Its function is as follows. Protein covalently attached to the 5' extremity of the genomic and subgenomic RNAs. It may serve as a primer for the replicase. The sequence is that of Non-structural polyprotein 1AB (ORF1) from Ovis aries (Sheep).